The following is a 151-amino-acid chain: Peptide methionine sulfoxide reductase MsrB (151 aa).

Positions 9–132 (DGELKRTLTK…NSAALKFIPF (124 aa)) constitute a MsrB domain. The Nucleophile role is filled by C121.

This sequence belongs to the MsrB Met sulfoxide reductase family.

The enzyme catalyses L-methionyl-[protein] + [thioredoxin]-disulfide + H2O = L-methionyl-(R)-S-oxide-[protein] + [thioredoxin]-dithiol. The sequence is that of Peptide methionine sulfoxide reductase MsrB from Mycoplasma pneumoniae (strain ATCC 29342 / M129 / Subtype 1) (Mycoplasmoides pneumoniae).